The following is a 217-amino-acid chain: Magnetosome protein MamA (217 aa).

TPR repeat units follow at residues 12–44 (VTLY…NDDI), 46–79 (QVYY…DAFD), 80–113 (VEVA…APDN), 114–147 (IKVA…NPVN), 148–181 (FNVR…RPNE), and 182–215 (GKVH…DERS). The interval 41–112 (NDDIRQVYYR…LERSIADAPD (72 aa)) is N-terminal domain. Residues 113 to 217 (NIKVATVLGL…ANELDERSAV (105 aa)) are C-terminal domain.

This sequence belongs to the magnetosome MamA family. Forms round, 20 nm diameter complexes with a central cavity. Probably binds MamC. Interacts with full-length Mms6.

The protein localises to the magnetosome membrane. In terms of biological role, probably forms a large homooligomer on which other magnetosome subunits assemble. Required for formation of functional magnetosomes from pre-existing vesicles. The chain is Magnetosome protein MamA from Magnetospirillum gryphiswaldense (strain DSM 6361 / JCM 21280 / NBRC 15271 / MSR-1).